Here is a 248-residue protein sequence, read N- to C-terminus: MNGDNRPVEDAHYTETGFPYAATGSYMDFYGGAAQGPLNYDHAATMHPQDNLYWTMNTNAYKFGFSGSDNASFYGSYDMNDHLSRMSIGRTNWDYHPMVNVADDPENTVARSVQIGDTDEHSEAEECIANEHDPDSPQVSWQDDIDPDTMTYEELVELGEAVGTESRGLSQELIETLPTKKYKFGSIFSRKRAGERCVICQLKYKIGERQMNLPCKHVYHSECISKWLSINKVCPVCNSEVFGEPSIH.

An RING-type; atypical zinc finger spans residues 197 to 238; the sequence is CVICQLKYKIGERQMNLPCKHVYHSECISKWLSINKVCPVCN.

Interacts with the E2 ubiquitin conjugating enzyme UBC10 via the RING domain. Interacts with DA1. In terms of processing, auto-ubiquitinated. In terms of tissue distribution, mostly expressed in inflorescence, and, to a lower extent, in seedlings, roots, stems, leaves and siliques.

The catalysed reaction is S-ubiquitinyl-[E2 ubiquitin-conjugating enzyme]-L-cysteine + [acceptor protein]-L-lysine = [E2 ubiquitin-conjugating enzyme]-L-cysteine + N(6)-ubiquitinyl-[acceptor protein]-L-lysine.. It functions in the pathway protein modification; protein ubiquitination. In terms of biological role, E3 ubiquitin-protein ligase that limits organ size, and possibly seed size, in a dose-dependent manner. Negatively regulates the duration of cell proliferation in leaves and petals independently of the major phytohormones (e.g. auxin, cytokinin, gibberellin, brassinosteroids, ethylene, abscisic acid, jasmonic acid), probably by targeting growth stimulators for degradation. Limits the proliferation of root meristematic cells. Polyubiquitinates DA1. Involved in the promotion of leaf senescence, in addition to its function in restricting plant growth. Possesses E3 ubiquitin-protein ligase activity in vitro. The polypeptide is E3 ubiquitin-protein ligase BIG BROTHER (BB) (Arabidopsis thaliana (Mouse-ear cress)).